Reading from the N-terminus, the 338-residue chain is Ketol-acid reductoisomerase (NADP(+)) (338 aa).

The KARI N-terminal Rossmann domain occupies 1–181 (MKVYYDKDCD…GGGRTGIIET (181 aa)). Residues 24 to 27 (YGSQ), arginine 47, serine 50, serine 52, and 82 to 85 (DEFQ) contribute to the NADP(+) site. Residue histidine 107 is part of the active site. Residue glycine 133 coordinates NADP(+). One can recognise a KARI C-terminal knotted domain in the interval 182-327 (TFKDETETDL…EKLRTMMPWI (146 aa)). Mg(2+) contacts are provided by aspartate 190, glutamate 194, glutamate 226, and glutamate 230. Residue serine 251 coordinates substrate.

The protein belongs to the ketol-acid reductoisomerase family. It depends on Mg(2+) as a cofactor.

The catalysed reaction is (2R)-2,3-dihydroxy-3-methylbutanoate + NADP(+) = (2S)-2-acetolactate + NADPH + H(+). It carries out the reaction (2R,3R)-2,3-dihydroxy-3-methylpentanoate + NADP(+) = (S)-2-ethyl-2-hydroxy-3-oxobutanoate + NADPH + H(+). Its pathway is amino-acid biosynthesis; L-isoleucine biosynthesis; L-isoleucine from 2-oxobutanoate: step 2/4. It functions in the pathway amino-acid biosynthesis; L-valine biosynthesis; L-valine from pyruvate: step 2/4. Involved in the biosynthesis of branched-chain amino acids (BCAA). Catalyzes an alkyl-migration followed by a ketol-acid reduction of (S)-2-acetolactate (S2AL) to yield (R)-2,3-dihydroxy-isovalerate. In the isomerase reaction, S2AL is rearranged via a Mg-dependent methyl migration to produce 3-hydroxy-3-methyl-2-ketobutyrate (HMKB). In the reductase reaction, this 2-ketoacid undergoes a metal-dependent reduction by NADPH to yield (R)-2,3-dihydroxy-isovalerate. The polypeptide is Ketol-acid reductoisomerase (NADP(+)) (Azotobacter vinelandii (strain DJ / ATCC BAA-1303)).